We begin with the raw amino-acid sequence, 307 residues long: Pantothenate kinase (307 aa).

Gly87–Ser94 is an ATP binding site.

It belongs to the prokaryotic pantothenate kinase family.

The protein resides in the cytoplasm. The catalysed reaction is (R)-pantothenate + ATP = (R)-4'-phosphopantothenate + ADP + H(+). It participates in cofactor biosynthesis; coenzyme A biosynthesis; CoA from (R)-pantothenate: step 1/5. The sequence is that of Pantothenate kinase from Vibrio vulnificus (strain YJ016).